The chain runs to 451 residues: 3-phosphoshikimate 1-carboxyvinyltransferase (451 aa).

Residues Lys-30, Ser-31, and Arg-35 each coordinate 3-phosphoshikimate. Lys-30 contacts phosphoenolpyruvate. The phosphoenolpyruvate site is built by Gly-101 and Arg-130. Positions 176, 177, 178, 321, and 348 each coordinate 3-phosphoshikimate. Gln-178 is a binding site for phosphoenolpyruvate. Catalysis depends on Asp-321, which acts as the Proton acceptor. The phosphoenolpyruvate site is built by Arg-352 and Gln-422.

Belongs to the EPSP synthase family. As to quaternary structure, monomer.

It localises to the cytoplasm. The enzyme catalyses 3-phosphoshikimate + phosphoenolpyruvate = 5-O-(1-carboxyvinyl)-3-phosphoshikimate + phosphate. Its pathway is metabolic intermediate biosynthesis; chorismate biosynthesis; chorismate from D-erythrose 4-phosphate and phosphoenolpyruvate: step 6/7. In terms of biological role, catalyzes the transfer of the enolpyruvyl moiety of phosphoenolpyruvate (PEP) to the 5-hydroxyl of shikimate-3-phosphate (S3P) to produce enolpyruvyl shikimate-3-phosphate and inorganic phosphate. This chain is 3-phosphoshikimate 1-carboxyvinyltransferase, found in Burkholderia pseudomallei (strain K96243).